A 216-amino-acid chain; its full sequence is FMN-dependent NADH:quinone oxidoreductase (216 aa).

FMN is bound by residues 15–17 and 139–142; these read SVS and SRGG.

It belongs to the azoreductase type 1 family. Homodimer. The cofactor is FMN.

The catalysed reaction is 2 a quinone + NADH + H(+) = 2 a 1,4-benzosemiquinone + NAD(+). The enzyme catalyses N,N-dimethyl-1,4-phenylenediamine + anthranilate + 2 NAD(+) = 2-(4-dimethylaminophenyl)diazenylbenzoate + 2 NADH + 2 H(+). Its function is as follows. Quinone reductase that provides resistance to thiol-specific stress caused by electrophilic quinones. Functionally, also exhibits azoreductase activity. Catalyzes the reductive cleavage of the azo bond in aromatic azo compounds to the corresponding amines. The protein is FMN-dependent NADH:quinone oxidoreductase of Acidovorax ebreus (strain TPSY) (Diaphorobacter sp. (strain TPSY)).